A 438-amino-acid chain; its full sequence is Serine--tRNA ligase (438 aa).

243–245 contributes to the L-serine binding site; sequence TAE. 274–276 is an ATP binding site; that stretch reads RSE. Glutamate 297 serves as a coordination point for L-serine. 361–364 is an ATP binding site; it reads EISS. Serine 396 provides a ligand contact to L-serine.

This sequence belongs to the class-II aminoacyl-tRNA synthetase family. Type-1 seryl-tRNA synthetase subfamily. As to quaternary structure, homodimer. The tRNA molecule binds across the dimer.

It is found in the cytoplasm. The catalysed reaction is tRNA(Ser) + L-serine + ATP = L-seryl-tRNA(Ser) + AMP + diphosphate + H(+). It carries out the reaction tRNA(Sec) + L-serine + ATP = L-seryl-tRNA(Sec) + AMP + diphosphate + H(+). The protein operates within aminoacyl-tRNA biosynthesis; selenocysteinyl-tRNA(Sec) biosynthesis; L-seryl-tRNA(Sec) from L-serine and tRNA(Sec): step 1/1. Catalyzes the attachment of serine to tRNA(Ser). Is also able to aminoacylate tRNA(Sec) with serine, to form the misacylated tRNA L-seryl-tRNA(Sec), which will be further converted into selenocysteinyl-tRNA(Sec). The chain is Serine--tRNA ligase from Ralstonia pickettii (strain 12J).